Here is a 96-residue protein sequence, read N- to C-terminus: Small ribosomal subunit protein bS6 (96 aa).

This sequence belongs to the bacterial ribosomal protein bS6 family.

In terms of biological role, binds together with bS18 to 16S ribosomal RNA. The polypeptide is Small ribosomal subunit protein bS6 (Streptococcus mutans serotype c (strain ATCC 700610 / UA159)).